Reading from the N-terminus, the 383-residue chain is Chitinase-3-like protein 1 (383 aa).

The first 21 residues, 1–21, serve as a signal peptide directing secretion; sequence MGLRVAQTGFVVLVLLQSCAA. In terms of domain architecture, GH18 spans 22 to 383; sequence YKLICYYTSW…NAIKDVLAGV (362 aa). Cys26 and Cys51 form a disulfide bridge. The N-linked (GlcNAc...) asparagine glycan is linked to Asn60. Chitin-binding positions include 70-71, 97-100, Tyr141, 204-207, and Lys263; these read EW, GGWN, and LTYD. A disulfide bridge connects residues Cys300 and Cys364. The segment at 324-338 is important for AKT1 activation and IL8 production; the sequence is QWVAYDDQESVKNKA. Chitin is bound at residue Trp352.

It belongs to the glycosyl hydrolase 18 family. Monomer. In terms of tissue distribution, detected in mammary gland.

It localises to the secreted. Its subcellular location is the extracellular space. The protein localises to the cytoplasm. It is found in the perinuclear region. The protein resides in the endoplasmic reticulum. In terms of biological role, carbohydrate-binding lectin with a preference for chitin. Has no chitinase activity. May play a role in tissue remodeling and in the capacity of cells to respond to and cope with changes in their environment. Plays a role in T-helper cell type 2 (Th2) inflammatory response and IL-13-induced inflammation, regulating allergen sensitization, inflammatory cell apoptosis, dendritic cell accumulation and M2 macrophage differentiation. Facilitates invasion of pathogenic enteric bacteria into colonic mucosa and lymphoid organs. Mediates activation of AKT1 signaling pathway and subsequent IL8 production in colonic epithelial cells. Regulates antibacterial responses in lung by contributing to macrophage bacterial killing, controlling bacterial dissemination and augmenting host tolerance. Also regulates hyperoxia-induced injury, inflammation and epithelial apoptosis in lung. The protein is Chitinase-3-like protein 1 (CHI3L1) of Bubalus bubalis (Domestic water buffalo).